A 443-amino-acid polypeptide reads, in one-letter code: Chromosomal replication initiator protein DnaA (443 aa).

Positions 1-80 (MFLEEKLNLV…ETCGDKIPVE (80 aa)) are domain I, interacts with DnaA modulators. The interval 80–104 (EILIETKAASPLQSILEKSFDQKDF) is domain II. Positions 105-321 (QFNPDYTFET…GALNDIYLYK (217 aa)) are domain III, AAA+ region. The ATP site is built by Gly148, Gly150, Lys151, and Thr152. Positions 322-443 (KSYSLLFLNL…ERISSKYKLQ (122 aa)) are domain IV, binds dsDNA.

Belongs to the DnaA family. In terms of assembly, oligomerizes as a right-handed, spiral filament on DNA at oriC.

The protein resides in the cytoplasm. Plays an essential role in the initiation and regulation of chromosomal replication. ATP-DnaA binds to the origin of replication (oriC) to initiate formation of the DNA replication initiation complex once per cell cycle. Binds the DnaA box (a 9 base pair repeat at the origin) and separates the double-stranded (ds)DNA. Forms a right-handed helical filament on oriC DNA; dsDNA binds to the exterior of the filament while single-stranded (ss)DNA is stabiized in the filament's interior. The ATP-DnaA-oriC complex binds and stabilizes one strand of the AT-rich DNA unwinding element (DUE), permitting loading of DNA polymerase. After initiation quickly degrades to an ADP-DnaA complex that is not apt for DNA replication. Binds acidic phospholipids. The sequence is that of Chromosomal replication initiator protein DnaA from Leptospira interrogans serogroup Icterohaemorrhagiae serovar copenhageni (strain Fiocruz L1-130).